A 439-amino-acid chain; its full sequence is Trigger factor (439 aa).

A PPIase FKBP-type domain is found at 162-247 (GDTVTIDYVG…IHEVKAKQLP (86 aa)).

It belongs to the FKBP-type PPIase family. Tig subfamily.

The protein localises to the cytoplasm. The catalysed reaction is [protein]-peptidylproline (omega=180) = [protein]-peptidylproline (omega=0). Its function is as follows. Involved in protein export. Acts as a chaperone by maintaining the newly synthesized protein in an open conformation. Functions as a peptidyl-prolyl cis-trans isomerase. This is Trigger factor from Lactobacillus delbrueckii subsp. bulgaricus (strain ATCC 11842 / DSM 20081 / BCRC 10696 / JCM 1002 / NBRC 13953 / NCIMB 11778 / NCTC 12712 / WDCM 00102 / Lb 14).